The sequence spans 131 residues: Leptin receptor gene-related protein (131 aa).

The next 4 helical transmembrane spans lie at 7–27, 32–52, 69–89, and 100–120; these read LVAL…GCAL, VYWP…HFIA, LAYF…VILA, and GLVL…FLVF.

This sequence belongs to the OB-RGRP/VPS55 family. In terms of assembly, interacts with LEPR. Interacts with RAB13.

Its subcellular location is the golgi apparatus membrane. It is found in the endosome membrane. Functionally, negatively regulates leptin receptor (LEPR) cell surface expression, and thus decreases response to leptin/LEP. Negatively regulates growth hormone (GH) receptor cell surface expression in liver. May play a role in liver resistance to GH during periods of reduced nutrient availability. This Sus scrofa (Pig) protein is Leptin receptor gene-related protein (LEPROT).